Reading from the N-terminus, the 163-residue chain is Cyclic pyranopterin monophosphate synthase (163 aa).

Substrate contacts are provided by residues Leu79–His81 and Met117–Glu118. Residue Asp132 is part of the active site.

The protein belongs to the MoaC family. As to quaternary structure, homohexamer; trimer of dimers.

The enzyme catalyses (8S)-3',8-cyclo-7,8-dihydroguanosine 5'-triphosphate = cyclic pyranopterin phosphate + diphosphate. The protein operates within cofactor biosynthesis; molybdopterin biosynthesis. Catalyzes the conversion of (8S)-3',8-cyclo-7,8-dihydroguanosine 5'-triphosphate to cyclic pyranopterin monophosphate (cPMP). The sequence is that of Cyclic pyranopterin monophosphate synthase from Chloroflexus aurantiacus (strain ATCC 29366 / DSM 635 / J-10-fl).